Consider the following 329-residue polypeptide: RNA-binding protein CP33, chloroplastic (329 aa).

The transit peptide at 1 to 69 (MSSAYCSSAV…NIRRHRFFCA (69 aa)) directs the protein to the chloroplast. The span at 77–104 (ADDEIQASVEEEEEVEEEGDEGEEEVEE) shows a compositional bias: acidic residues. Disordered regions lie at residues 77 to 117 (ADDE…EEGR) and 296 to 329 (SERE…NVSA). RRM domains lie at 116–194 (GRLY…FPEV) and 219–297 (HKVY…LASE).

Its subcellular location is the plastid. The protein resides in the chloroplast. Its function is as follows. Could be involved in splicing and/or processing of chloroplast RNAs. The polypeptide is RNA-binding protein CP33, chloroplastic (Arabidopsis thaliana (Mouse-ear cress)).